A 151-amino-acid chain; its full sequence is Methylglyoxal synthase (151 aa).

An MGS-like domain is found at 6 to 151; sequence RTMPAHKHVA…DYEAYLAERM (146 aa). Residues H19, K23, 45 to 48, and 65 to 66 each bind substrate; these read TGTT and SG. D71 functions as the Proton donor/acceptor in the catalytic mechanism. H98 contacts substrate.

This sequence belongs to the methylglyoxal synthase family.

It carries out the reaction dihydroxyacetone phosphate = methylglyoxal + phosphate. Its function is as follows. Catalyzes the formation of methylglyoxal from dihydroxyacetone phosphate. The protein is Methylglyoxal synthase of Vibrio parahaemolyticus serotype O3:K6 (strain RIMD 2210633).